The primary structure comprises 418 residues: uncharacterized protein (418 aa).

4 disordered regions span residues 123-174 (KVKD…DSDK), 209-231 (FDKE…EKEE), 258-302 (KDDN…DEEL), and 344-418 (KDAD…YFKK). Basic and acidic residues predominate over residues 136–154 (NKKDKKDKNKQNEEDHLII). A compositionally biased stretch (acidic residues) spans 156–170 (DVIDEEIQEKEDNES). A compositionally biased stretch (basic and acidic residues) spans 209–227 (FDKEEKEREKEKEKEKEKE). Low complexity predominate over residues 266–293 (NQNQNQNQNNNNNNNNNNNNNNNNNNNN). Acidic residues predominate over residues 344–356 (KDADDSDDFDEFN). Over residues 359 to 374 (DTESQLSKSKQKSPNV) the composition is skewed to polar residues. A compositionally biased stretch (low complexity) spans 375-390 (KKTTTTTTTSTSTSSR). The segment covering 391–401 (KQSKSKLKPKS) has biased composition (basic residues).

This is an uncharacterized protein from Dictyostelium discoideum (Social amoeba).